Consider the following 23-residue polypeptide: GIGKFLHSAGKFGKAFLGEVMKS.

Expressed by the skin glands.

The protein localises to the secreted. Its function is as follows. Has antimicrobial activity against Gram-negative bacterium E.coli ATCC 25922 (MIC=50 uM) and against fungus C.albicans ATCC 90028 (MIC=100 uM). Has no hemolytic activity against human erythrocytes even at high concentrations. In Xenopus borealis (Kenyan clawed frog), this protein is Magainin-B2.